The chain runs to 343 residues: Probable long-chain-alcohol O-fatty-acyltransferase 2 (343 aa).

8 consecutive transmembrane segments (helical) span residues 7 to 27 (NLIK…YISS), 36 to 56 (LLSL…FSSV), 58 to 78 (FCVI…FLFA), 117 to 137 (PMSK…LHVY), 148 to 168 (FAFL…ILVF), 235 to 255 (GMLA…FYVI), 260 to 280 (TWEV…EIAM), and 292 to 312 (AVSG…LFYP).

This sequence belongs to the wax synthase family.

Its subcellular location is the membrane. The enzyme catalyses a long chain fatty alcohol + a fatty acyl-CoA = a wax ester + CoA. Catalyzes the final step in the synthesis of long-chain linear esters (waxes). This Arabidopsis thaliana (Mouse-ear cress) protein is Probable long-chain-alcohol O-fatty-acyltransferase 2 (AT2).